Reading from the N-terminus, the 131-residue chain is Large ribosomal subunit protein bL19 (131 aa).

Positions 1–11 (MEETMNNQEAP) are enriched in polar residues. The disordered stretch occupies residues 1-20 (MEETMNNQEAPETSEEETVA).

Belongs to the bacterial ribosomal protein bL19 family.

This protein is located at the 30S-50S ribosomal subunit interface and may play a role in the structure and function of the aminoacyl-tRNA binding site. This chain is Large ribosomal subunit protein bL19, found in Dehalococcoides mccartyi (strain ATCC BAA-2100 / JCM 16839 / KCTC 5957 / BAV1).